We begin with the raw amino-acid sequence, 488 residues long: Bifunctional protein HldE (488 aa).

The tract at residues 1–330 (MDRKSIESIF…NAVALAHSDS (330 aa)) is ribokinase. An ATP-binding site is contributed by 205 to 208 (NRRE). The active site involves Asp275. The cytidylyltransferase stretch occupies residues 356 to 488 (FTNGCFDLLH…IIERVLERYS (133 aa)).

The protein in the N-terminal section; belongs to the carbohydrate kinase PfkB family. It in the C-terminal section; belongs to the cytidylyltransferase family. As to quaternary structure, homodimer.

It carries out the reaction D-glycero-beta-D-manno-heptose 7-phosphate + ATP = D-glycero-beta-D-manno-heptose 1,7-bisphosphate + ADP + H(+). It catalyses the reaction D-glycero-beta-D-manno-heptose 1-phosphate + ATP + H(+) = ADP-D-glycero-beta-D-manno-heptose + diphosphate. It functions in the pathway nucleotide-sugar biosynthesis; ADP-L-glycero-beta-D-manno-heptose biosynthesis; ADP-L-glycero-beta-D-manno-heptose from D-glycero-beta-D-manno-heptose 7-phosphate: step 1/4. Its pathway is nucleotide-sugar biosynthesis; ADP-L-glycero-beta-D-manno-heptose biosynthesis; ADP-L-glycero-beta-D-manno-heptose from D-glycero-beta-D-manno-heptose 7-phosphate: step 3/4. Functionally, catalyzes the phosphorylation of D-glycero-D-manno-heptose 7-phosphate at the C-1 position to selectively form D-glycero-beta-D-manno-heptose-1,7-bisphosphate. Catalyzes the ADP transfer from ATP to D-glycero-beta-D-manno-heptose 1-phosphate, yielding ADP-D-glycero-beta-D-manno-heptose. This Pelobacter propionicus (strain DSM 2379 / NBRC 103807 / OttBd1) protein is Bifunctional protein HldE.